The sequence spans 335 residues: Basic endochitinase B (335 aa).

An N-terminal signal peptide occupies residues 1-33 (MPPQKENHRTLNKMKTNLFLFLIFSLLLSLSSA). The 42-residue stretch at 34 to 75 (EQCGRQAGGALCPNGLCCSEFGWCGNTEPYCKQPGCQSQCTP) folds into the Chitin-binding type-1 domain. 7 disulfides stabilise this stretch: C36–C51, C45–C57, C50–C64, C69–C73, C107–C169, C181–C189, and C288–C320. The Proton donor role is filled by E151. The propeptide at 329–335 (GLLEAAI) is removed in mature form. The short motif at 329 to 335 (GLLEAAI) is the Vacuolar targeting signal element.

It belongs to the glycosyl hydrolase 19 family. Chitinase class I subfamily. High constitutive level in roots with lower levels in leaves and flowering shoots.

It localises to the vacuole. The enzyme catalyses Random endo-hydrolysis of N-acetyl-beta-D-glucosaminide (1-&gt;4)-beta-linkages in chitin and chitodextrins.. In terms of biological role, defense against chitin-containing fungal pathogens. Seems particularly implicated in resistance to jasmonate-inducing pathogens such as A.brassicicola. In vitro antifungal activity against T.reesei, but not against A.solani, F.oxysporum, S.sclerotiorum, G.graminis and P.megasperma. This Arabidopsis thaliana (Mouse-ear cress) protein is Basic endochitinase B (CHI-B).